A 354-amino-acid chain; its full sequence is Histidinol-phosphate aminotransferase (354 aa).

At Lys210 the chain carries N6-(pyridoxal phosphate)lysine.

This sequence belongs to the class-II pyridoxal-phosphate-dependent aminotransferase family. Histidinol-phosphate aminotransferase subfamily. In terms of assembly, homodimer. Pyridoxal 5'-phosphate serves as cofactor.

It catalyses the reaction L-histidinol phosphate + 2-oxoglutarate = 3-(imidazol-4-yl)-2-oxopropyl phosphate + L-glutamate. It participates in amino-acid biosynthesis; L-histidine biosynthesis; L-histidine from 5-phospho-alpha-D-ribose 1-diphosphate: step 7/9. The polypeptide is Histidinol-phosphate aminotransferase (Clostridium botulinum (strain Okra / Type B1)).